The primary structure comprises 742 residues: Serine/threonine-protein kinase SKY1 (742 aa).

The interval 13–146 (KSAHLADTST…KDYRPGGYHP (134 aa)) is disordered. Residues 19–35 (DTSTDASISCEEATSSQ) show a composition bias toward polar residues. A compositionally biased stretch (low complexity) spans 56-73 (TKSKLSLALQTSKSSSSA). Over residues 81–101 (TSSKTEDFSTKSIKKKPDSGV) the composition is skewed to basic and acidic residues. Over residues 106-127 (SIQSDSGPQSDSDLDSDSSISS) the composition is skewed to low complexity. Basic and acidic residues predominate over residues 128-140 (CDERNEESLKDYR). The Protein kinase domain maps to 158 to 706 (YILVRKLGWG…AGGLVNHPWL (549 aa)). ATP-binding positions include 164–172 (LGWGHFSTV) and K187. The active-site Proton acceptor is the D294. 2 positions are modified to phosphothreonine: T383 and T386. A phosphoserine mark is found at S388, S393, S410, S427, S432, S445, S449, and S453. The disordered stretch occupies residues 459 to 491 (INEDSNDNNNNDNSKNKNNNNNNSNNNNNEDIM). Residues 465-489 (DNNNNDNSKNKNNNNNNSNNNNNED) show a composition bias toward low complexity.

Belongs to the protein kinase superfamily. Ser/Thr protein kinase family.

It catalyses the reaction L-seryl-[protein] + ATP = O-phospho-L-seryl-[protein] + ADP + H(+). The catalysed reaction is L-threonyl-[protein] + ATP = O-phospho-L-threonyl-[protein] + ADP + H(+). Functionally, constitutively active kinase, specifically and sequentially phosphorylates serine/arginine (SR)-type shuttling mRNA binding proteins in their RS dipeptide repeats. This Saccharomyces cerevisiae (strain ATCC 204508 / S288c) (Baker's yeast) protein is Serine/threonine-protein kinase SKY1 (SKY1).